Here is a 558-residue protein sequence, read N- to C-terminus: MDLLHKAKLAPLLPGVYIFYGKNKEYIYVGKAKRLRNRLLSYFNRSNGKYSKKIQAIVNEAEELDYIVVSNEREALLLEANLIFNHKPKYNVMLKDAEFYPYIEITKELFPAVQIVRIRSTGGEYFGPYTDVKFVKDLIDCLQQVYQFRTCRRDMSKSTKPCMEFYMHRCAAPCTGDLEPDSYINSSIQPLRRVLNGDISETLDLIEEKMKKHAKMMDFENAAKYRDLLVKFENVMQRQGVVLEQWRNLDVIGRFKNSYAVLRIRGGHVVGKLSYELDSTKLEDFIFHYYMVGKNELPEAVILERNINFDAEIYFGRPRDKLEEELLHKARENAKNQAYTSGLRKDLLNKMVKVLNLNRYPMKIEGFDVSHLHGKLTVASVVVFFDGLPRKNEYRHYRFNSDRIDDFLTLKELVKRRYSKHELPDMIFVDGGTGQINAVVEALMEIGKECDVVGLAKQNEIVCTRFGELILPFDSPILRTLVRIRDEAHRFANSFHRKLRRKSALSSILDEIPGIGPKRKKKLIEAFGSVKNIRSATLQEIAEVLGSRKLAAEILSRL.

In terms of domain architecture, GIY-YIG spans 12–92 (LLPGVYIFYG…IFNHKPKYNV (81 aa)). Residues 200–235 (SETLDLIEEKMKKHAKMMDFENAAKYRDLLVKFENV) form the UVR domain.

The protein belongs to the UvrC family. Interacts with UvrB in an incision complex.

It localises to the cytoplasm. Its function is as follows. The UvrABC repair system catalyzes the recognition and processing of DNA lesions. UvrC both incises the 5' and 3' sides of the lesion. The N-terminal half is responsible for the 3' incision and the C-terminal half is responsible for the 5' incision. The chain is UvrABC system protein C from Pseudothermotoga lettingae (strain ATCC BAA-301 / DSM 14385 / NBRC 107922 / TMO) (Thermotoga lettingae).